Here is a 72-residue protein sequence, read N- to C-terminus: uncharacterized protein (72 aa).

The interval 1–53 is disordered; it reads MTNEPSTSTPTSTSTSTSTSTSTSTTTLTSTSSTPTSTSTSTSTSTSTSTSTS.

This is an uncharacterized protein from Dictyostelium discoideum (Social amoeba).